The primary structure comprises 560 residues: SWI/SNF complex subunit SWI3A homolog (560 aa).

The span at 1 to 13 shows a compositional bias: low complexity; sequence MSPPVAGAASSGD. Residues 1–22 are disordered; it reads MSPPVAGAASSGDGPPGRPPRE. Residues 24-127 enclose the SWIRM domain; the sequence is YTIPASSGWF…FSASPSRPEA (104 aa). One can recognise an SANT domain in the interval 242–293; sequence HSSSAWTDAETLLLLEGVLKHGDDWDLIAQHVRTKNKSECIARLIQLPFGEH. A compositionally biased stretch (polar residues) spans 311-330; sequence TTDGKVNKSTVKESSSQPTE. Disordered stretches follow at residues 311-352 and 414-445; these read TTDG…EEHP and QTRAFSSNHARQSDDVGGGDRDVEMHGHPDKK. The span at 331–342 shows a compositional bias: acidic residues; it reads TVDDMQIDGNED. Basic and acidic residues-rich tracts occupy residues 343–352 and 424–445; these read GADKSVEEHP and RQSDDVGGGDRDVEMHGHPDKK.

As to quaternary structure, interacts with LFR.

The protein resides in the nucleus. Component of a multiprotein complex equivalent of the SWI/SNF complex, an ATP-dependent chromatin-remodeling complex, which is required for the positive and negative regulation of gene expression of a large number of genes. It changes chromatin structure by altering DNA-histone contacts within a nucleosome, leading eventually to a change in nucleosome position, thus facilitating or repressing binding of gene-specific transcription factors. In Oryza sativa subsp. japonica (Rice), this protein is SWI/SNF complex subunit SWI3A homolog.